Consider the following 257-residue polypeptide: Imidazole glycerol phosphate synthase subunit HisF (257 aa).

Residues Asp11 and Asp130 contribute to the active site.

The protein belongs to the HisA/HisF family. In terms of assembly, heterodimer of HisH and HisF.

The protein localises to the cytoplasm. It carries out the reaction 5-[(5-phospho-1-deoxy-D-ribulos-1-ylimino)methylamino]-1-(5-phospho-beta-D-ribosyl)imidazole-4-carboxamide + L-glutamine = D-erythro-1-(imidazol-4-yl)glycerol 3-phosphate + 5-amino-1-(5-phospho-beta-D-ribosyl)imidazole-4-carboxamide + L-glutamate + H(+). It functions in the pathway amino-acid biosynthesis; L-histidine biosynthesis; L-histidine from 5-phospho-alpha-D-ribose 1-diphosphate: step 5/9. In terms of biological role, IGPS catalyzes the conversion of PRFAR and glutamine to IGP, AICAR and glutamate. The HisF subunit catalyzes the cyclization activity that produces IGP and AICAR from PRFAR using the ammonia provided by the HisH subunit. The polypeptide is Imidazole glycerol phosphate synthase subunit HisF (Shewanella loihica (strain ATCC BAA-1088 / PV-4)).